A 717-amino-acid polypeptide reads, in one-letter code: Polyribonucleotide nucleotidyltransferase (717 aa).

Residues Asp-496 and Asp-502 each contribute to the Mg(2+) site. The 60-residue stretch at 563–622 folds into the KH domain; it reads PRLLSFKIDPEMIGLVIGPGGKTIKGITEETGVKIDIDDDGTVTIAAADGEKAKQACNII. Residues 632 to 700 form the S1 motif domain; the sequence is GDVYVGRVTR…SKGRVNLTRL (69 aa).

It belongs to the polyribonucleotide nucleotidyltransferase family. Mg(2+) is required as a cofactor.

The protein localises to the cytoplasm. It catalyses the reaction RNA(n+1) + phosphate = RNA(n) + a ribonucleoside 5'-diphosphate. Involved in mRNA degradation. Catalyzes the phosphorolysis of single-stranded polyribonucleotides processively in the 3'- to 5'-direction. This chain is Polyribonucleotide nucleotidyltransferase, found in Trichodesmium erythraeum (strain IMS101).